Reading from the N-terminus, the 195-residue chain is Calcium channel flower (195 aa).

3 helical membrane-spanning segments follow: residues 34-54 (LLGIVAAFFAILFGLWNVISI), 66-88 (IIQMVAGFVVMLLEAPCCFVCIE), and 117-137 (IFMCFGLASLFGSGLIFATGV).

It belongs to the calcium channel flower family. Homomultimer. Associates with the dally/ magu complex.

It localises to the cell membrane. The protein resides in the cytoplasmic vesicle. The protein localises to the secretory vesicle. It is found in the synaptic vesicle membrane. Its subcellular location is the presynaptic cell membrane. It localises to the endosome. Channel activity is inhibited by La(3+), which reduces Ca(2+) influx and thus inhibits it's function in promoting activity-dependent bulk endocytosis (ADBE) in response to high stimuli. In terms of biological role, transmembrane protein which mediates synaptic endocytosis, fitness-based cell culling, neuronal culling, morphogen gradient scaling, and calcium transport. Regulates synaptic endocytosis and hence couples exo- with endocytosis. Controls two major modes of synaptic vesicle (SV) endocytosis in the synaptic boutons of neuromuscular junctions (NMJs); Ca(2+) channel-independent Clathrin-mediated endocytosis (CME) in response to mild stimulation, and Ca(2+) channel-dependent activity-dependent bulk endocytosis (ADBE) in response to strong stimulation. Functions in ADBE and subsequent SV reformation from bulk endosomes by initiating Ca(2+) channel-dependent phosphatidylinositol 4,5-bisphosphate (PtdIns(4,5)P2) compartmentalization in synaptic boutons. There it acts at the periactive zone to provide the low Ca(2+) levels required to initiate Calcineurin activation and upregulate PtdIns(4,5)P2. Conversely PtdIns(4,5)P2 enhances fwe Ca(2+) channel-activity, establishing a positive feedback loop that induces PtdIns(4,5)P2 microdomain at the periactive zone. These microdomains trigger bulk membrane invagination (i.e. ADBE) by triggering actin polymerization while also promoting localization of fwe to bulk endosomes, thereby removing the ADBE trigger to reduce endocytosis and prevent excess membrane uptake. PtdIns(4,5)P2 then promotes SV reformation from the bulk endosomes, to coordinate ADBE and subsequent SV reformation. Different combinations of the flower isoforms at the cell membrane are also required for the identification and elimination of suboptimal or supernumerary cells during development, regeneration, and adulthood. Required for the recognition and elimination of unfit cells in the developing wing during cell competition. In the developing pupal retina, mediates the elimination of unwanted postmitotic neurons, including supernumerary photoreceptor neurons that form at the periphery of the retina and are contained within incomplete ommatidia units. Also required for efficient elimination and replacement of old neurons by newly generated neurons during regeneration in the adult brain following mechanical injury. Downstream of the flower fitness fingerprints, cells identified as unwanted or unfit are eliminated via apoptosis through the expression of ahuizotl (azot). However, the cells marked for elimination by the flower isoforms only undergo apoptosis if additional thresholds are met; (1) their neighboring fit/healthy cells express different levels of the fwe isoforms, and (2) the levels of the protective signal SPARC expressed by the loser or unwanted cells are unable to inhibit caspase activation. These additional thresholds for flower-mediated apoptosis, allows useful cells to recover from transient and limited stress before they are unnecessarily eliminated. Functions with dally and magu in a mechanism of scaling, which utilises apoptosis to ensure that the dpp morphogen gradient, which mediates organ growth, remains proportional to the size of the growing wing. In this mechanism, fwe represses dally- and Magu-dependent activity in expanding the gradient, and dally/Magu inhibits fwe-dependent apoptosis to keep cell death rate low. When the levels of these different proteins are optimally regulated the gradient correctly scales with organ growth but when this fails, fwe-mediated apoptosis is activated to trim the developing tissue to match the correct size of the gradient. This is Calcium channel flower from Drosophila ananassae (Fruit fly).